A 272-amino-acid polypeptide reads, in one-letter code: Endoplasmic reticulum resident protein 27 (272 aa).

A signal peptide spans methionine 1–alanine 25. Residues glutamate 38 to alanine 151 enclose the Thioredoxin domain. Asparagine 99 carries an N-linked (GlcNAc...) asparagine glycan. Residues aspartate 229 to aspartate 232 form a PDIA3-binding site region. Residues lysine 269–leucine 272 carry the Prevents secretion from ER motif.

It belongs to the protein disulfide isomerase family. In terms of assembly, interacts with PDIA3.

Its subcellular location is the endoplasmic reticulum lumen. Its function is as follows. Specifically binds unfolded proteins and may recruit protein disulfide isomerase PDIA3 to unfolded substrates. Binds protein substrates via a hydrophobic pocket in the C-terminal domain. May play a role in the unfolded stress response. The chain is Endoplasmic reticulum resident protein 27 (ERP27) from Bos taurus (Bovine).